The chain runs to 362 residues: Dihydroorotate dehydrogenase (quinone) (362 aa).

FMN contacts are provided by residues 62 to 66 (AGYDK) and Thr-86. Lys-66 contributes to the substrate binding site. Position 111–115 (111–115 (NRLGF)) interacts with substrate. FMN contacts are provided by Asn-139 and Asn-170. Substrate is bound at residue Asn-170. Ser-173 acts as the Nucleophile in catalysis. Asn-175 lines the substrate pocket. Residues Lys-215 and Ser-243 each contribute to the FMN site. 244–245 (NT) contacts substrate. Residues Gly-266, Gly-295, and 316–317 (YS) contribute to the FMN site.

This sequence belongs to the dihydroorotate dehydrogenase family. Type 2 subfamily. As to quaternary structure, monomer. FMN serves as cofactor.

It is found in the cell membrane. The catalysed reaction is (S)-dihydroorotate + a quinone = orotate + a quinol. Its pathway is pyrimidine metabolism; UMP biosynthesis via de novo pathway; orotate from (S)-dihydroorotate (quinone route): step 1/1. Catalyzes the conversion of dihydroorotate to orotate with quinone as electron acceptor. This is Dihydroorotate dehydrogenase (quinone) from Rhizobium leguminosarum bv. trifolii (strain WSM2304).